The following is a 136-amino-acid chain: Small ribosomal subunit protein uS11 (136 aa).

Disordered stretches follow at residues 1 to 20 (MAQR…NVTN) and 115 to 136 (VTPQ…EKAR). Positions 125-136 (PPKRVLKREKAR) are enriched in basic residues.

Belongs to the universal ribosomal protein uS11 family. As to quaternary structure, part of the 30S ribosomal subunit. Interacts with proteins S7 and S18. Binds to IF-3.

Functionally, located on the platform of the 30S subunit, it bridges several disparate RNA helices of the 16S rRNA. Forms part of the Shine-Dalgarno cleft in the 70S ribosome. In Mycoplasmopsis pulmonis (strain UAB CTIP) (Mycoplasma pulmonis), this protein is Small ribosomal subunit protein uS11.